Consider the following 250-residue polypeptide: 2,3-bisphosphoglycerate-dependent phosphoglycerate mutase (250 aa).

Substrate contacts are provided by residues 10–17 (RHGESQWN), 23–24 (TG), Arg-62, 89–92 (ERHY), Lys-100, 116–117 (RR), and 185–186 (GN). His-11 (tele-phosphohistidine intermediate) is an active-site residue. The active-site Proton donor/acceptor is the Glu-89.

Belongs to the phosphoglycerate mutase family. BPG-dependent PGAM subfamily. In terms of assembly, homodimer.

The catalysed reaction is (2R)-2-phosphoglycerate = (2R)-3-phosphoglycerate. It participates in carbohydrate degradation; glycolysis; pyruvate from D-glyceraldehyde 3-phosphate: step 3/5. In terms of biological role, catalyzes the interconversion of 2-phosphoglycerate and 3-phosphoglycerate. The chain is 2,3-bisphosphoglycerate-dependent phosphoglycerate mutase from Salmonella agona (strain SL483).